Here is a 671-residue protein sequence, read N- to C-terminus: Probable potassium transport system protein Kup (671 aa).

Positions 1–43 (MSQIPSPNDPASTGAAPSSAAVPAGPSATPAPSPTAGFSLPGH) are disordered. The segment covering 10–37 (PASTGAAPSSAAVPAGPSATPAPSPTAG) has biased composition (low complexity). Transmembrane regions (helical) follow at residues 52-72 (LAAL…TSPL), 92-112 (VLGV…FKYM), 147-167 (LMLG…TPAI), 181-201 (PAME…LFLF), 209-229 (VGAV…VLGV), 255-275 (GWHG…GEAL), 291-311 (WLGL…ALLL), 323-343 (LLAP…AAIV), 381-401 (IYLP…VLGF), 407-427 (LASA…LLFH), 441-461 (AWPL…ANVV), and 465-485 (DGGW…STWK).

Belongs to the HAK/KUP transporter (TC 2.A.72) family.

It localises to the cell inner membrane. It catalyses the reaction K(+)(in) + H(+)(in) = K(+)(out) + H(+)(out). In terms of biological role, transport of potassium into the cell. Likely operates as a K(+):H(+) symporter. In Anaeromyxobacter sp. (strain K), this protein is Probable potassium transport system protein Kup.